The chain runs to 337 residues: DnaJ homolog dnj-2 (337 aa).

A helical transmembrane segment spans residues 4 to 24 (AIAAPILFLLVSFFVQECESV). A J domain is found at 36–105 (NCYDVLEVNR…EAKTNYDYYL (70 aa)). 2 helical membrane passes run 127-147 (VDLR…QFLS) and 222-242 (LAWH…WTAL). A coiled-coil region spans residues 293–323 (LKRNCATWKAERDAAEQEKMAQSGRYKRYKR).

The protein belongs to the DNAJC25 family.

Its subcellular location is the membrane. This is DnaJ homolog dnj-2 (dnj-2) from Caenorhabditis elegans.